The chain runs to 104 residues: Large ribosomal subunit protein uL24 (104 aa).

Belongs to the universal ribosomal protein uL24 family. Part of the 50S ribosomal subunit.

One of two assembly initiator proteins, it binds directly to the 5'-end of the 23S rRNA, where it nucleates assembly of the 50S subunit. Functionally, one of the proteins that surrounds the polypeptide exit tunnel on the outside of the subunit. The sequence is that of Large ribosomal subunit protein uL24 from Anaplasma phagocytophilum (strain HZ).